The following is a 288-amino-acid chain: Quinate/shikimate dehydrogenase (288 aa).

Substrate contacts are provided by K71 and D107. NAD(+) contacts are provided by residues 132 to 135 (AGGA), 155 to 158 (NRRD), K205, 232 to 235 (CVYN), and G255.

Belongs to the shikimate dehydrogenase family. Homodimer.

It carries out the reaction L-quinate + NAD(+) = 3-dehydroquinate + NADH + H(+). The enzyme catalyses L-quinate + NADP(+) = 3-dehydroquinate + NADPH + H(+). The catalysed reaction is shikimate + NADP(+) = 3-dehydroshikimate + NADPH + H(+). It catalyses the reaction shikimate + NAD(+) = 3-dehydroshikimate + NADH + H(+). Its pathway is metabolic intermediate biosynthesis; chorismate biosynthesis; chorismate from D-erythrose 4-phosphate and phosphoenolpyruvate: step 4/7. The actual biological function of YdiB remains unclear, nor is it known whether 3-dehydroshikimate or quinate represents the natural substrate. Catalyzes the reversible NAD-dependent reduction of both 3-dehydroshikimate (DHSA) and 3-dehydroquinate to yield shikimate (SA) and quinate, respectively. It can use both NAD or NADP for catalysis, however it has higher catalytic efficiency with NAD. The sequence is that of Quinate/shikimate dehydrogenase from Escherichia coli O1:K1 / APEC.